The primary structure comprises 905 residues: Alanine--tRNA ligase (905 aa).

The Zn(2+) site is built by H582, H586, C687, and H691.

This sequence belongs to the class-II aminoacyl-tRNA synthetase family. Zn(2+) is required as a cofactor.

Its subcellular location is the cytoplasm. It catalyses the reaction tRNA(Ala) + L-alanine + ATP = L-alanyl-tRNA(Ala) + AMP + diphosphate. Its function is as follows. Catalyzes the attachment of alanine to tRNA(Ala) in a two-step reaction: alanine is first activated by ATP to form Ala-AMP and then transferred to the acceptor end of tRNA(Ala). Also edits incorrectly charged Ser-tRNA(Ala) and Gly-tRNA(Ala) via its editing domain. This chain is Alanine--tRNA ligase, found in Mycoplasma mobile (strain ATCC 43663 / 163K / NCTC 11711) (Mesomycoplasma mobile).